A 558-amino-acid polypeptide reads, in one-letter code: Arginine--tRNA ligase (558 aa).

The 'HIGH' region signature appears at Pro119–His129.

The protein belongs to the class-I aminoacyl-tRNA synthetase family. As to quaternary structure, monomer.

Its subcellular location is the cytoplasm. The catalysed reaction is tRNA(Arg) + L-arginine + ATP = L-arginyl-tRNA(Arg) + AMP + diphosphate. The protein is Arginine--tRNA ligase of Lactobacillus johnsonii (strain CNCM I-12250 / La1 / NCC 533).